Here is a 117-residue protein sequence, read N- to C-terminus: Large ribosomal subunit protein uL24 (117 aa).

Belongs to the universal ribosomal protein uL24 family. As to quaternary structure, part of the 50S ribosomal subunit.

One of two assembly initiator proteins, it binds directly to the 5'-end of the 23S rRNA, where it nucleates assembly of the 50S subunit. In terms of biological role, one of the proteins that surrounds the polypeptide exit tunnel on the outside of the subunit. The sequence is that of Large ribosomal subunit protein uL24 from Thermosynechococcus vestitus (strain NIES-2133 / IAM M-273 / BP-1).